Consider the following 505-residue polypeptide: Glycerol kinase (505 aa).

Position 14 (Thr-14) interacts with ADP. ATP-binding residues include Thr-14, Thr-15, and Ser-16. Residue Thr-14 participates in sn-glycerol 3-phosphate binding. An ADP-binding site is contributed by Arg-18. Positions 84, 85, 136, and 246 each coordinate sn-glycerol 3-phosphate. Glycerol-binding residues include Arg-84, Glu-85, Tyr-136, Asp-246, and Gln-247. Thr-268 and Gly-311 together coordinate ADP. Residues Thr-268, Gly-311, Gln-315, and Gly-412 each coordinate ATP. The ADP site is built by Gly-412 and Asn-416.

The protein belongs to the FGGY kinase family.

It catalyses the reaction glycerol + ATP = sn-glycerol 3-phosphate + ADP + H(+). It participates in polyol metabolism; glycerol degradation via glycerol kinase pathway; sn-glycerol 3-phosphate from glycerol: step 1/1. With respect to regulation, inhibited by fructose 1,6-bisphosphate (FBP). Key enzyme in the regulation of glycerol uptake and metabolism. Catalyzes the phosphorylation of glycerol to yield sn-glycerol 3-phosphate. The chain is Glycerol kinase from Vibrio cholerae serotype O1 (strain ATCC 39315 / El Tor Inaba N16961).